Here is a 206-residue protein sequence, read N- to C-terminus: Alpha-S1-casein (206 aa).

Residues 1–15 (MKLLIFICLAAVALA) form the signal peptide. Phosphoserine occurs at positions 33, 77, 78, 79, 80, 81, 82, and 89. The interval 67-106 (HGMEGHEQRGSSSSSSEEVVGNSAEQKHVQKEEDVPSQSY) is disordered. Residues 91 to 100 (EQKHVQKEED) show a composition bias toward basic and acidic residues.

This sequence belongs to the alpha-casein family. In terms of tissue distribution, mammary gland specific. Secreted in milk.

It localises to the secreted. Important role in the capacity of milk to transport calcium phosphate. This chain is Alpha-S1-casein (CSN1S1), found in Sus scrofa (Pig).